Reading from the N-terminus, the 127-residue chain is Phosphoribosyl-ATP pyrophosphatase (127 aa).

The protein belongs to the PRA-PH family.

It localises to the cytoplasm. The enzyme catalyses 1-(5-phospho-beta-D-ribosyl)-ATP + H2O = 1-(5-phospho-beta-D-ribosyl)-5'-AMP + diphosphate + H(+). Its pathway is amino-acid biosynthesis; L-histidine biosynthesis; L-histidine from 5-phospho-alpha-D-ribose 1-diphosphate: step 2/9. The polypeptide is Phosphoribosyl-ATP pyrophosphatase (Polaromonas sp. (strain JS666 / ATCC BAA-500)).